A 204-amino-acid polypeptide reads, in one-letter code: Glideosome-associated protein 45 (204 aa).

The interval M1–E86 is disordered. G2 carries N-myristoyl glycine lipidation. Residues G2–K29 form a targets GAP45 to the cell membrane; however, dispensable for the formation of the glideosome complex and the association with the inner membrane complex region. Residues K9 to P53 are compositionally biased toward basic and acidic residues. Acidic residues predominate over residues L54–E73. S89 is modified (phosphoserine; by CPK10). Position 103 is a phosphoserine; by CPK10 and PKB (S103). Position 149 is a phosphoserine; by CPK10 (S149).

Component of the glideosome complex composed of GAP50, GAP45, MTIP and MyoA; the complex is formed during the late schizont stage and in merozoites. MyoA, MTIP and GAP45 probably form an initial complex in the cytoplasm which is then recruited to the outer face of the inner membrane complex via the interaction with GAP50. Interacts with GAP50; the interaction is independent of GAP45 phosphorylation status and can also occur independently of the formation of the glideosome complex. Post-translationally, phosphorylated at multiple sites. Phosphorylation increases during the schizont stage and peaks in segmented merozoites. May be phosphorylated by PKB. In schizonts, phosphorylated at Ser-89 and Ser-149 in response to phospholipase C-mediated calcium release. Phosphorylation at Ser-149 begins in early schizonts while phosphorylation at Ser-103 begins in late schizonts. Phosphorylation at Ser-89, Ser-103 and Ser-149 appears to be dispensable for GAP45 inner membrane complex localization or GAP45 inclusion in the glideosome complex. Phosphorylation is not required for interaction with GAP50; however, it may regulate the interaction with MTIP and MyoA. In terms of processing, N-myristoylated by NMT. N-myristoylation may contribute to the targeting of GAP45 to the inner membrane complex with the subsequent palmitoylation strengthening the interaction with the membrane. Palmitoylated. Palmitoylation appears to follow N-myristoylation and may strengthen the interaction with the inner membrane complex.

The protein localises to the inner membrane complex. Its function is as follows. Component of the glideosome complex, an inner membrane complex structure involved in parasite gliding motility and host cell invasion. During the asexual blood stage, required in schizonts to recruit MTIP and MyoA to the inner membrane complex where they assemble with GAP50 to form the glideosome complex. By regulating the formation of the glideosome, plays an essential role during merozoite invasion of host erythrocytes. The protein is Glideosome-associated protein 45 of Plasmodium falciparum (isolate 3D7).